We begin with the raw amino-acid sequence, 382 residues long: ATP phosphoribosyltransferase regulatory subunit (382 aa).

Belongs to the class-II aminoacyl-tRNA synthetase family. HisZ subfamily. As to quaternary structure, heteromultimer composed of HisG and HisZ subunits.

Its subcellular location is the cytoplasm. The protein operates within amino-acid biosynthesis; L-histidine biosynthesis; L-histidine from 5-phospho-alpha-D-ribose 1-diphosphate: step 1/9. Its function is as follows. Required for the first step of histidine biosynthesis. May allow the feedback regulation of ATP phosphoribosyltransferase activity by histidine. The sequence is that of ATP phosphoribosyltransferase regulatory subunit from Lacticaseibacillus paracasei (strain ATCC 334 / BCRC 17002 / CCUG 31169 / CIP 107868 / KCTC 3260 / NRRL B-441) (Lactobacillus paracasei).